The chain runs to 138 residues: Dehydratase iacD (138 aa).

An EthD domain is found at 18-113 (GVSEEDFIEW…LKDQDVWMDN (96 aa)).

This sequence belongs to the tpcK family.

Its pathway is secondary metabolite biosynthesis. Functionally, dehydratase; part of the gene cluster that mediates the biosynthesis of iso-A82775C, a enylepoxycyclohexane and biosynthetic precursor of the chloropestolide anticancer natural products. Within the cluster, the prenyltransferase iacE prenylates siccayne to generate pestalodiol E, using dimethylallyl diphosphate (DMAPP) as cosubstrate. The probable oxidoreductase iacF is then involved in the epoxidation of pestalodiol F to pestalodiol F, which is further converted to pestalofone A by the short-chain dehydrogenase/reductase iacG. Iso-A82775C is subsequently generated from pestalofone A by the short-chain dehydrogenase/reductase iacC. Iso-A82775C is further condensed with maldoxin via a Diels-Alder reaction to produce the anticancer natural products chloropestolides A to E. The sequence is that of Dehydratase iacD from Pestalotiopsis fici (strain W106-1 / CGMCC3.15140).